Consider the following 339-residue polypeptide: Phomopsene synthase (339 aa).

Mg(2+) contacts are provided by aspartate 89, aspartate 94, asparagine 224, serine 228, and glutamate 232.

It belongs to the terpene synthase family. Requires Mg(2+) as cofactor.

The catalysed reaction is (2E,6E,10E)-geranylgeranyl diphosphate = phomopsene + diphosphate. The enzyme catalyses (2E,6E,10E)-geranylgeranyl diphosphate = allokutznerene + diphosphate. The protein operates within secondary metabolite biosynthesis; terpenoid biosynthesis. Diterpene synthase that catalyzes the conversion of geranylgeranyl diphosphate (GGPP) to phomopsene, a diterpene previously reported from the fungus P.amygdali. Phomopsene is the main product, but the enzyme can also produce allokutznerene (about 50% of phomopsene production activity) and traces of spiroviolene. Cannot use geranyl diphosphate (GPP), farnesyl diphosphate (FPP) and geranylfarnesyl diphosphate (GFPP). This is Phomopsene synthase from Allokutzneria albata (Kibdelosporangium albatum).